The primary structure comprises 242 residues: Aliphatic sulfonates import ATP-binding protein SsuB 1 (242 aa).

The region spanning 11–227 (VAVRRLSRAF…RPSHPDFEDL (217 aa)) is the ABC transporter domain. 43–50 (GESGSGKT) contacts ATP.

It belongs to the ABC transporter superfamily. Aliphatic sulfonates importer (TC 3.A.1.17.2) family. In terms of assembly, the complex is composed of two ATP-binding proteins (SsuB), two transmembrane proteins (SsuC) and a solute-binding protein (SsuA).

The protein localises to the cell inner membrane. It catalyses the reaction ATP + H2O + aliphatic sulfonate-[sulfonate-binding protein]Side 1 = ADP + phosphate + aliphatic sulfonateSide 2 + [sulfonate-binding protein]Side 1.. In terms of biological role, part of the ABC transporter complex SsuABC involved in aliphatic sulfonates import. Responsible for energy coupling to the transport system. This Paracoccus denitrificans (strain Pd 1222) protein is Aliphatic sulfonates import ATP-binding protein SsuB 1.